A 193-amino-acid chain; its full sequence is Mesogenin-1 (193 aa).

The interval 34–59 (GPFELNQASPSQSLSPAPSLESYSSS) is disordered. Positions 40–59 (QASPSQSLSPAPSLESYSSS) are enriched in low complexity. Positions 124 to 178 (QRRRKASEREKLRMRTLADALHTLRNYLPPVYSQRGQPLTKIQTLKYTIKYIGEL) constitute a bHLH domain.

The protein resides in the nucleus. In terms of biological role, involved in specifying the paraxial, but not dorsal, mesoderm. May regulate the expression of T-box transcription factors required for mesoderm formation and differentiation. The protein is Mesogenin-1 (MSGN1) of Homo sapiens (Human).